Reading from the N-terminus, the 135-residue chain is S-protein homolog 7 (135 aa).

The first 20 residues, M1 to G20, serve as a signal peptide directing secretion.

This sequence belongs to the plant self-incompatibility (S1) protein family.

The protein resides in the secreted. The polypeptide is S-protein homolog 7 (Arabidopsis thaliana (Mouse-ear cress)).